The following is a 114-amino-acid chain: MSLKIRLARAGAKKRPFYHIVVADSRSPRDGKFIERIGTYNPMLPADHEDRIRLVTDRVTHWLSQGAQATDRVARFIGKAGLAPMPAFREQPVQSAPKKKAQERAAERAKAAEA.

Residues alanine 87–alanine 114 are disordered. The span at lysine 100 to alanine 114 shows a compositional bias: basic and acidic residues.

This sequence belongs to the bacterial ribosomal protein bS16 family.

The polypeptide is Small ribosomal subunit protein bS16 (Acidiphilium cryptum (strain JF-5)).